We begin with the raw amino-acid sequence, 469 residues long: Aspartyl/glutamyl-tRNA(Asn/Gln) amidotransferase subunit B (469 aa).

Belongs to the GatB/GatE family. GatB subfamily. Heterotrimer of A, B and C subunits.

The enzyme catalyses L-glutamyl-tRNA(Gln) + L-glutamine + ATP + H2O = L-glutaminyl-tRNA(Gln) + L-glutamate + ADP + phosphate + H(+). It carries out the reaction L-aspartyl-tRNA(Asn) + L-glutamine + ATP + H2O = L-asparaginyl-tRNA(Asn) + L-glutamate + ADP + phosphate + 2 H(+). Allows the formation of correctly charged Asn-tRNA(Asn) or Gln-tRNA(Gln) through the transamidation of misacylated Asp-tRNA(Asn) or Glu-tRNA(Gln) in organisms which lack either or both of asparaginyl-tRNA or glutaminyl-tRNA synthetases. The reaction takes place in the presence of glutamine and ATP through an activated phospho-Asp-tRNA(Asn) or phospho-Glu-tRNA(Gln). The sequence is that of Aspartyl/glutamyl-tRNA(Asn/Gln) amidotransferase subunit B from Methanococcus maripaludis (strain DSM 14266 / JCM 13030 / NBRC 101832 / S2 / LL).